Reading from the N-terminus, the 129-residue chain is Small ribosomal subunit protein uS11 (129 aa).

This sequence belongs to the universal ribosomal protein uS11 family. In terms of assembly, part of the 30S ribosomal subunit. Interacts with proteins S7 and S18. Binds to IF-3.

Its function is as follows. Located on the platform of the 30S subunit, it bridges several disparate RNA helices of the 16S rRNA. Forms part of the Shine-Dalgarno cleft in the 70S ribosome. This Pelotomaculum thermopropionicum (strain DSM 13744 / JCM 10971 / SI) protein is Small ribosomal subunit protein uS11.